A 398-amino-acid chain; its full sequence is Phospholipase C (398 aa).

The N-terminal stretch at 1–28 (MKRKICKALICATLATSLWAGASTKVYA) is a signal peptide. Zn(2+)-binding residues include Trp-29, His-39, Asp-84, His-96, His-154, Asp-158, His-164, His-176, and Glu-180. Residues 29 to 278 (WDGKIDGTGT…HDVSEGNDPS (250 aa)) form the Zn-dependent PLC domain. Residues 275–283 (NDPSVGKNV) form a linker region. One can recognise a PLAT domain in the interval 284 to 398 (KELVAYISTS…ISGNSTYNIK (115 aa)). Ca(2+) contacts are provided by Asp-297, Gly-299, Thr-300, Asp-301, Asp-321, Asn-322, Gly-324, Asn-325, Asp-326, Asp-364, and Ala-365.

The protein belongs to the bacterial zinc-metallophospholipase C family. Requires Ca(2+) as cofactor. Zn(2+) is required as a cofactor.

It is found in the secreted. The enzyme catalyses a 1,2-diacyl-sn-glycero-3-phosphocholine + H2O = phosphocholine + a 1,2-diacyl-sn-glycerol + H(+). Functionally, bacterial hemolysins are exotoxins that attack blood cell membranes and cause cell rupture. Constitutes an essential virulence factor in gas gangrene. Binds to eukaryotic membranes where it hydrolyzes both phosphatidylcholine and sphingomyelin. The diacylglycerol produced can activate both the arachidonic acid pathway, leading to modulation of the inflammatory response cascade and thrombosis, and protein kinase C, leading to activation of eukaryotic phospholipases and further membrane damage. Acts on human and mouse erythrocytes, but not on rabbit or horse erythrocytes. In Clostridium perfringens (strain 13 / Type A), this protein is Phospholipase C (plc).